Here is a 241-residue protein sequence, read N- to C-terminus: Biosynthetic peptidoglycan transglycosylase (241 aa).

Residues 18–38 (GVIGIIALWMAGILIFAFLPV) traverse the membrane as a helical segment.

It belongs to the glycosyltransferase 51 family.

Its subcellular location is the cell inner membrane. It carries out the reaction [GlcNAc-(1-&gt;4)-Mur2Ac(oyl-L-Ala-gamma-D-Glu-L-Lys-D-Ala-D-Ala)](n)-di-trans,octa-cis-undecaprenyl diphosphate + beta-D-GlcNAc-(1-&gt;4)-Mur2Ac(oyl-L-Ala-gamma-D-Glu-L-Lys-D-Ala-D-Ala)-di-trans,octa-cis-undecaprenyl diphosphate = [GlcNAc-(1-&gt;4)-Mur2Ac(oyl-L-Ala-gamma-D-Glu-L-Lys-D-Ala-D-Ala)](n+1)-di-trans,octa-cis-undecaprenyl diphosphate + di-trans,octa-cis-undecaprenyl diphosphate + H(+). The protein operates within cell wall biogenesis; peptidoglycan biosynthesis. Functionally, peptidoglycan polymerase that catalyzes glycan chain elongation from lipid-linked precursors. This chain is Biosynthetic peptidoglycan transglycosylase, found in Yersinia pestis bv. Antiqua (strain Antiqua).